The sequence spans 28 residues: Small integral membrane protein 47 (28 aa).

Residues 7-24 (VTLAMALFTILTSIYFFN) traverse the membrane as a helical segment.

It is found in the membrane. This is Small integral membrane protein 47 from Homo sapiens (Human).